The chain runs to 491 residues: Proline--tRNA ligase (491 aa).

The protein belongs to the class-II aminoacyl-tRNA synthetase family. ProS type 3 subfamily. Homodimer.

The protein resides in the cytoplasm. The catalysed reaction is tRNA(Pro) + L-proline + ATP = L-prolyl-tRNA(Pro) + AMP + diphosphate. Functionally, catalyzes the attachment of proline to tRNA(Pro) in a two-step reaction: proline is first activated by ATP to form Pro-AMP and then transferred to the acceptor end of tRNA(Pro). The protein is Proline--tRNA ligase of Cytophaga hutchinsonii (strain ATCC 33406 / DSM 1761 / CIP 103989 / NBRC 15051 / NCIMB 9469 / D465).